Consider the following 186-residue polypeptide: Sec-independent protein translocase protein TatB (186 aa).

A helical transmembrane segment spans residues 1 to 21; sequence MFDIGFSELILLMVLGLVVLG. The segment at 162–186 is disordered; that stretch reads LSSYYPPDDIEIAPASKSQSSKTKS. Polar residues predominate over residues 177–186; sequence SKSQSSKTKS.

The protein belongs to the TatB family. As to quaternary structure, the Tat system comprises two distinct complexes: a TatABC complex, containing multiple copies of TatA, TatB and TatC subunits, and a separate TatA complex, containing only TatA subunits. Substrates initially bind to the TatABC complex, which probably triggers association of the separate TatA complex to form the active translocon.

The protein resides in the cell inner membrane. Functionally, part of the twin-arginine translocation (Tat) system that transports large folded proteins containing a characteristic twin-arginine motif in their signal peptide across membranes. Together with TatC, TatB is part of a receptor directly interacting with Tat signal peptides. TatB may form an oligomeric binding site that transiently accommodates folded Tat precursor proteins before their translocation. The chain is Sec-independent protein translocase protein TatB from Haemophilus influenzae (strain 86-028NP).